We begin with the raw amino-acid sequence, 35 residues long: MPCPKILKQCKSDEDCCRGWKCFGFSIKDKMCISR.

Intrachain disulfides connect C3/C17, C10/C22, and C16/C32.

Expressed by the venom gland.

Its subcellular location is the secreted. Neurotoxin. In Phoneutria nigriventer (Brazilian armed spider), this protein is U14-ctenitoxin-Pn1a.